A 143-amino-acid chain; its full sequence is MGKRRRARELALQSLFYVDSTSAPPLEALDLFCQNFPPPKDLAQFFYELAKGVINNQDEIDRLIEQHSNNWKLYRMSAVDLNLMRIAAYEFLFCPDVPRRVSINEAIDIGKRFGTAESGAFINGILDSIHLHLGKEEKAEKKR.

Belongs to the NusB family.

In terms of biological role, involved in transcription antitermination. Required for transcription of ribosomal RNA (rRNA) genes. Binds specifically to the boxA antiterminator sequence of the ribosomal RNA (rrn) operons. The polypeptide is Transcription antitermination protein NusB (Desulfatibacillum aliphaticivorans).